The sequence spans 82 residues: NAD(P)H-quinone oxidoreductase subunit O, organellar chromatophore (82 aa).

The protein belongs to the complex I NdhO subunit family. NDH-1 can be composed of about 15 different subunits; different subcomplexes with different compositions have been identified which probably have different functions.

The protein localises to the plastid. It localises to the organellar chromatophore thylakoid membrane. The enzyme catalyses a plastoquinone + NADH + (n+1) H(+)(in) = a plastoquinol + NAD(+) + n H(+)(out). It carries out the reaction a plastoquinone + NADPH + (n+1) H(+)(in) = a plastoquinol + NADP(+) + n H(+)(out). Functionally, NDH-1 shuttles electrons from an unknown electron donor, via FMN and iron-sulfur (Fe-S) centers, to quinones in the respiratory and/or the photosynthetic chain. The immediate electron acceptor for the enzyme in this species is believed to be plastoquinone. Couples the redox reaction to proton translocation, and thus conserves the redox energy in a proton gradient. Cyanobacterial NDH-1 also plays a role in inorganic carbon-concentration. The protein is NAD(P)H-quinone oxidoreductase subunit O, organellar chromatophore of Paulinella chromatophora.